The sequence spans 238 residues: Ribosomal RNA small subunit methyltransferase G (238 aa).

S-adenosyl-L-methionine contacts are provided by residues Gly-99, Leu-104, 122–124, 150–151, and Arg-164; these read DAT and VE.

The protein belongs to the methyltransferase superfamily. RNA methyltransferase RsmG family.

It is found in the cytoplasm. In terms of biological role, specifically methylates the N7 position of a guanine in 16S rRNA. The sequence is that of Ribosomal RNA small subunit methyltransferase G from Chlorobium luteolum (strain DSM 273 / BCRC 81028 / 2530) (Pelodictyon luteolum).